Here is a 181-residue protein sequence, read N- to C-terminus: Probable pyruvoyl-dependent arginine decarboxylase (181 aa).

The residue at position 43 (serine 43) is a Pyruvic acid (Ser).

Belongs to the PdaD family. Pyruvate is required as a cofactor.

It carries out the reaction L-arginine + H(+) = agmatine + CO2. The sequence is that of Probable pyruvoyl-dependent arginine decarboxylase from Chlorobium phaeovibrioides (strain DSM 265 / 1930) (Prosthecochloris vibrioformis (strain DSM 265)).